The chain runs to 79 residues: Conotoxin Kt6.1 (79 aa).

A signal peptide spans 1–22 (MKLTCVLIISVLFLTASQLITA). A propeptide spanning residues 23–47 (VYSRDKQQYRAARLRDEMRNLKGAR) is cleaved from the precursor. 3 disulfide bridges follow: cysteine 49-cysteine 62, cysteine 56-cysteine 67, and cysteine 61-cysteine 77. 4-hydroxyproline is present on residues proline 60 and proline 63.

The protein belongs to the conotoxin O1 superfamily. Expressed by the venom duct.

It localises to the secreted. Its function is as follows. Ion channel inhibitor that inhibits the increase in intracellular calcium upon depolarization in DRG neurons. In vivo, both intraperitoneal and intracranial injections into mice induce hyperactivity. This is Conotoxin Kt6.1 from Conus kintoki (Cone snail).